Consider the following 127-residue polypeptide: Protein NEGATIVE REGULATOR OF RESISTANCE (127 aa).

Disordered stretches follow at residues 1–28 (MDAT…VDEV) and 47–127 (TRRL…RAPA). Low complexity predominate over residues 112–127 (PPSDAPATPRSARAPA).

This sequence belongs to the NPR1-interactor family. Interacts with NPR1/NH1. Interacts with NPR3/NH3.

It localises to the nucleus. Its function is as follows. Acts as a negative regulator of disease resistance. Acts on basal resistance, age-related resistance and resistance mediated by the LRR receptor kinase XA21. Plants over-expressing NRR display enhanced susceptibility to the bacterial blight Xanthomonas oryzae pv. oryzae (Xoo). Binds to and represses NPR1/NH1-mediated transcriptional activation of LG2 in vitro. This Oryza sativa subsp. japonica (Rice) protein is Protein NEGATIVE REGULATOR OF RESISTANCE.